The sequence spans 63 residues: Conotoxin Vi5.1a (63 aa).

An N-terminal signal peptide occupies residues 1 to 22; that stretch reads MRCVPVFIILLLLIPSAPSADA. A propeptide spanning residues 23 to 50 is cleaved from the precursor; that stretch reads QPKTKDDVPLASYHDNAERTLQRLWNQR. Proline amide is present on proline 62.

Belongs to the conotoxin T superfamily. In terms of processing, contains 2 disulfide bonds that can be either 'C1-C3, C2-C4' or 'C1-C4, C2-C3', since these disulfide connectivities have been observed for conotoxins with cysteine framework V (for examples, see AC P0DQQ7 and AC P81755). In terms of tissue distribution, expressed by the venom duct.

The protein resides in the secreted. The protein is Conotoxin Vi5.1a of Conus virgo (Virgin cone).